The sequence spans 128 residues: MSNVPTELKYASSHEWVRSEGNGVYTVGITEHAQELLGDMVFVDLPEVGRTVAAGEDCAVAESVKAASDIYAPISGEIVAVNGELESSPELVNSGPYAEGFLFQIKASDEGELAKLLDATAYQASIDE.

The region spanning 24 to 106 (VYTVGITEHA…YAEGFLFQIK (83 aa)) is the Lipoyl-binding domain. The residue at position 65 (Lys65) is an N6-lipoyllysine.

The protein belongs to the GcvH family. The glycine cleavage system is composed of four proteins: P, T, L and H. (R)-lipoate serves as cofactor.

Its function is as follows. The glycine cleavage system catalyzes the degradation of glycine. The H protein shuttles the methylamine group of glycine from the P protein to the T protein. The sequence is that of Glycine cleavage system H protein from Serratia proteamaculans (strain 568).